We begin with the raw amino-acid sequence, 299 residues long: Nucleotide-binding protein RER_30260 (299 aa).

ATP is bound at residue 19-26 (GLSGAGLS). 70–73 (DVRS) contacts GTP.

It belongs to the RapZ-like family.

Functionally, displays ATPase and GTPase activities. This chain is Nucleotide-binding protein RER_30260, found in Rhodococcus erythropolis (strain PR4 / NBRC 100887).